The following is a 138-amino-acid chain: MRILWIVAVCLIGVEGNLFQFAKMINGKLGAFSVWNYISYGCYCGWGGQGTPKDATDRCCFVHDCCYGRVRGCNPKLAIYAYSFKKGNIVCGKNNGCLRDICECDRVAANCFHQNQNTYNKNYKFLSSSRCRQTSEQC.

Positions 1–16 (MRILWIVAVCLIGVEG) are cleaved as a signal peptide. 7 cysteine pairs are disulfide-bonded: C42–C131, C44–C60, C59–C111, C65–C138, C66–C104, C73–C97, and C91–C102. The Ca(2+) site is built by Y43, G45, and G47. H63 is an active-site residue. A Ca(2+)-binding site is contributed by D64. D105 is an active-site residue.

In terms of assembly, heterodimer; non-covalently linked. The toxic basic protein has phospholipase A2 activity (chain HDP-1P) and the non-toxic acidic protein functions as its inhibitor (chain HPD-1I (AC A4VBF0)). Ca(2+) is required as a cofactor. In terms of tissue distribution, expressed by the venom gland.

It is found in the secreted. It carries out the reaction a 1,2-diacyl-sn-glycero-3-phosphocholine + H2O = a 1-acyl-sn-glycero-3-phosphocholine + a fatty acid + H(+). Its activity is regulated as follows. Enzymatic activity and neurotoxicity are inhibited by Triton X-100, which has been determined to be located in the center of the hydrophobic channel of the enzyme. Its function is as follows. Heterodimer: shows the same activities as the monomer, but with a lower potency. Monomer: snake venom phospholipase A2 (PLA2) that shows presynaptic neurotoxicity, anticoagulant activity and that weakly inhibits ADP-induced platelet aggregation. Inhibits exocytosis in pancreatic beta cells, confirming it can act presynaptically in inhibiting the exocytosis of neurotransmitters in neurons. PLA2 catalyzes the calcium-dependent hydrolysis of the 2-acyl groups in 3-sn-phosphoglycerides. This Vipera nikolskii (Nikolsky's adder) protein is Basic phospholipase A2 chain HDP-1P.